A 234-amino-acid polypeptide reads, in one-letter code: Leucyl/phenylalanyl-tRNA--protein transferase (234 aa).

Belongs to the L/F-transferase family.

It localises to the cytoplasm. It catalyses the reaction N-terminal L-lysyl-[protein] + L-leucyl-tRNA(Leu) = N-terminal L-leucyl-L-lysyl-[protein] + tRNA(Leu) + H(+). It carries out the reaction N-terminal L-arginyl-[protein] + L-leucyl-tRNA(Leu) = N-terminal L-leucyl-L-arginyl-[protein] + tRNA(Leu) + H(+). The catalysed reaction is L-phenylalanyl-tRNA(Phe) + an N-terminal L-alpha-aminoacyl-[protein] = an N-terminal L-phenylalanyl-L-alpha-aminoacyl-[protein] + tRNA(Phe). Functionally, functions in the N-end rule pathway of protein degradation where it conjugates Leu, Phe and, less efficiently, Met from aminoacyl-tRNAs to the N-termini of proteins containing an N-terminal arginine or lysine. The chain is Leucyl/phenylalanyl-tRNA--protein transferase from Salmonella gallinarum (strain 287/91 / NCTC 13346).